A 147-amino-acid chain; its full sequence is Probable flagellum biosynthesis repressor protein FlbT (147 aa).

It belongs to the FlbT family.

Has a post-transcriptional repressor function in flagellum biogenesis. Associates with the 5'-UTR of fljK mRNA and promotes its degradation. In Mesorhizobium japonicum (strain LMG 29417 / CECT 9101 / MAFF 303099) (Mesorhizobium loti (strain MAFF 303099)), this protein is Probable flagellum biosynthesis repressor protein FlbT.